The primary structure comprises 365 residues: Putative glutamate--cysteine ligase 2-2 (365 aa).

It belongs to the glutamate--cysteine ligase type 2 family. YbdK subfamily.

It carries out the reaction L-cysteine + L-glutamate + ATP = gamma-L-glutamyl-L-cysteine + ADP + phosphate + H(+). ATP-dependent carboxylate-amine ligase which exhibits weak glutamate--cysteine ligase activity. The polypeptide is Putative glutamate--cysteine ligase 2-2 (Mycolicibacterium vanbaalenii (strain DSM 7251 / JCM 13017 / BCRC 16820 / KCTC 9966 / NRRL B-24157 / PYR-1) (Mycobacterium vanbaalenii)).